The chain runs to 314 residues: Malate dehydrogenase (314 aa).

NAD(+)-binding positions include 11 to 16 (GSGNIG) and D35. Residues R84 and R90 each contribute to the substrate site. Residues N97 and 120 to 122 (ITN) each bind NAD(+). The substrate site is built by N122 and R153. Residue H177 is the Proton acceptor of the active site.

The protein belongs to the LDH/MDH superfamily. MDH type 3 family.

The catalysed reaction is (S)-malate + NAD(+) = oxaloacetate + NADH + H(+). Functionally, catalyzes the reversible oxidation of malate to oxaloacetate. The chain is Malate dehydrogenase from Rickettsia canadensis (strain McKiel).